Consider the following 500-residue polypeptide: AAA-ATPase At3g28580 (500 aa).

Residues 7–29 (LWTNTGSALATLMFVYTIFKQFF) form a helical membrane-spanning segment. The tract at residues 174–193 (NRERKLYSNTPGQSHGNNSK) is disordered. Over residues 180–193 (YSNTPGQSHGNNSK) the composition is skewed to polar residues. 247–254 (GPPGTGKS) contacts ATP. The disordered stretch occupies residues 462 to 500 (KEEAKKKVEEEEEEKQRKKEKVKEIEAEKEKKKKIEEEN).

This sequence belongs to the AAA ATPase family. BCS1 subfamily. Mg(2+) serves as cofactor.

The protein localises to the membrane. The enzyme catalyses ATP + H2O = ADP + phosphate + H(+). The sequence is that of AAA-ATPase At3g28580 from Arabidopsis thaliana (Mouse-ear cress).